A 148-amino-acid polypeptide reads, in one-letter code: Small ribosomal subunit protein uS13 (148 aa).

Belongs to the universal ribosomal protein uS13 family. As to quaternary structure, part of the 30S ribosomal subunit. Forms a loose heterodimer with protein S19. Forms two bridges to the 50S subunit in the 70S ribosome.

Its function is as follows. Located at the top of the head of the 30S subunit, it contacts several helices of the 16S rRNA. In the 70S ribosome it contacts the 23S rRNA (bridge B1a) and protein L5 of the 50S subunit (bridge B1b), connecting the 2 subunits; these bridges are implicated in subunit movement. This chain is Small ribosomal subunit protein uS13, found in Pyrococcus horikoshii (strain ATCC 700860 / DSM 12428 / JCM 9974 / NBRC 100139 / OT-3).